The chain runs to 180 residues: ATP synthase subunit delta (180 aa).

This sequence belongs to the ATPase delta chain family. F-type ATPases have 2 components, F(1) - the catalytic core - and F(0) - the membrane proton channel. F(1) has five subunits: alpha(3), beta(3), gamma(1), delta(1), epsilon(1). F(0) has three main subunits: a(1), b(2) and c(10-14). The alpha and beta chains form an alternating ring which encloses part of the gamma chain. F(1) is attached to F(0) by a central stalk formed by the gamma and epsilon chains, while a peripheral stalk is formed by the delta and b chains.

It is found in the cell membrane. Functionally, f(1)F(0) ATP synthase produces ATP from ADP in the presence of a proton or sodium gradient. F-type ATPases consist of two structural domains, F(1) containing the extramembraneous catalytic core and F(0) containing the membrane proton channel, linked together by a central stalk and a peripheral stalk. During catalysis, ATP synthesis in the catalytic domain of F(1) is coupled via a rotary mechanism of the central stalk subunits to proton translocation. Its function is as follows. This protein is part of the stalk that links CF(0) to CF(1). It either transmits conformational changes from CF(0) to CF(1) or is implicated in proton conduction. This Latilactobacillus sakei subsp. sakei (strain 23K) (Lactobacillus sakei subsp. sakei) protein is ATP synthase subunit delta.